The chain runs to 138 residues: MPPRSPLLALVFLAAGVLSSATSPPPPPCSRSCAALNCDSVGIRYGKYCGVGWSGCDGEEPCDDLDACCRDHDHCVDKKGLMSVKCHEKFKNCMRKVKKAGKIGFSRKCPYEMAMATMTSGMDMAIMLSQLGTQKLEL.

The N-terminal stretch at 1–21 (MPPRSPLLALVFLAAGVLSSA) is a signal peptide. 6 disulfide bridges follow: Cys29–Cys56, Cys33–Cys62, Cys38–Cys109, Cys49–Cys69, Cys68–Cys93, and Cys75–Cys86. Ca(2+)-binding residues include Tyr48, Gly50, and Trp53. Residue His72 is part of the active site. Asp73 serves as a coordination point for Ca(2+).

The protein belongs to the phospholipase A2 family. Requires Ca(2+) as cofactor.

Its subcellular location is the secreted. It carries out the reaction a 1,2-diacyl-sn-glycero-3-phosphocholine + H2O = a 1-acyl-sn-glycero-3-phosphocholine + a fatty acid + H(+). Its function is as follows. PA2 catalyzes the calcium-dependent hydrolysis of the 2-acyl groups in 3-sn-phosphoglycerides. Releases lysophospholipids (LPLs) and free fatty acids (FFAs) from membrane phospholipids in response to hormones and other external stimuli. This Oryza sativa subsp. japonica (Rice) protein is Probable phospholipase A2 homolog 1 (PLA2-I).